The following is a 122-amino-acid chain: UPF0231 protein VP2494 (122 aa).

The protein belongs to the UPF0231 family.

This chain is UPF0231 protein VP2494, found in Vibrio parahaemolyticus serotype O3:K6 (strain RIMD 2210633).